The primary structure comprises 504 residues: UDP-N-acetylglucosamine--peptide N-acetylglucosaminyltransferase GtfA subunit (504 aa).

Residue 16–19 (GVEY) participates in UDP binding. Histidine 243 contacts N-acetyl-D-glucosamine. 385–386 (HK) contributes to the UDP binding site. 405–408 (EGFG) is an N-acetyl-D-glucosamine binding site.

The protein belongs to the glycosyltransferase group 1 family. Glycosyltransferase 4 subfamily. In terms of assembly, interacts with stabilizing protein GtfB (Gtf1), probably via the N-terminus of this protein; probably forms a heterotetramer with 2 subunits each of GtfA and GtfB. Part of the accessory SecA2/SecY2 protein translocation apparatus.

It localises to the cytoplasm. Its subcellular location is the cell membrane. It carries out the reaction L-seryl-[protein] + UDP-N-acetyl-alpha-D-glucosamine = 3-O-[N-acetyl-alpha-D-glucosaminyl]-L-seryl-[protein] + UDP + H(+). Its pathway is protein modification; protein glycosylation. In terms of biological role, required for polymorphic O-glycosylation of serine-rich repeat protein Fap1. Catalyzes the first step in glycosylation by transferring N-acetylglucosamine from UDP-GlcNAc to serine residues in Fap1. Part of the accessory SecA2/SecY2 system specifically required to export Fap1, a serine-rich fimbrial adhesin encoded upstream in the same operon. The GtfA-GtfB (Gtf1-Gtf2 in this bacteria) complex adds GlcNAc from UDP-GlcNAc to Fap1, attaching the first sugar residue. Cannot use not UDP-Glc as substrate. This subunit has very low glycosyltransferase activity; the GtfB stabilizing protein enhances membrane association, protease resistance and glycosyltransferase activity. In Streptococcus parasanguinis, this protein is UDP-N-acetylglucosamine--peptide N-acetylglucosaminyltransferase GtfA subunit.